The sequence spans 158 residues: Transcription elongation factor GreA (158 aa).

The stretch at 47–68 (AEYDAAKEAQGLLELKIKKMEE) forms a coiled coil.

Belongs to the GreA/GreB family.

Necessary for efficient RNA polymerase transcription elongation past template-encoded arresting sites. The arresting sites in DNA have the property of trapping a certain fraction of elongating RNA polymerases that pass through, resulting in locked ternary complexes. Cleavage of the nascent transcript by cleavage factors such as GreA or GreB allows the resumption of elongation from the new 3'terminus. GreA releases sequences of 2 to 3 nucleotides. The chain is Transcription elongation factor GreA from Flavobacterium psychrophilum (strain ATCC 49511 / DSM 21280 / CIP 103535 / JIP02/86).